The chain runs to 276 residues: Diaminopimelate epimerase (276 aa).

Residues asparagine 13, glutamine 46, and asparagine 66 each coordinate substrate. The active-site Proton donor is the cysteine 75. Substrate is bound by residues 76–77, asparagine 159, asparagine 192, and 210–211; these read GN and ER. The active-site Proton acceptor is cysteine 219. 220 to 221 is a binding site for substrate; sequence GS.

This sequence belongs to the diaminopimelate epimerase family. Homodimer.

It is found in the cytoplasm. The enzyme catalyses (2S,6S)-2,6-diaminopimelate = meso-2,6-diaminopimelate. Its pathway is amino-acid biosynthesis; L-lysine biosynthesis via DAP pathway; DL-2,6-diaminopimelate from LL-2,6-diaminopimelate: step 1/1. Catalyzes the stereoinversion of LL-2,6-diaminopimelate (L,L-DAP) to meso-diaminopimelate (meso-DAP), a precursor of L-lysine and an essential component of the bacterial peptidoglycan. This is Diaminopimelate epimerase from Vibrio campbellii (strain ATCC BAA-1116).